We begin with the raw amino-acid sequence, 860 residues long: Leucine--tRNA ligase (860 aa).

Positions 42-52 match the 'HIGH' region motif; that stretch reads PYPSGRLHMGH. A 'KMSKS' region motif is present at residues 619-623; sequence KMSKS. K622 contacts ATP.

The protein belongs to the class-I aminoacyl-tRNA synthetase family.

It localises to the cytoplasm. It carries out the reaction tRNA(Leu) + L-leucine + ATP = L-leucyl-tRNA(Leu) + AMP + diphosphate. In Salmonella agona (strain SL483), this protein is Leucine--tRNA ligase.